The following is a 1233-amino-acid chain: Hemocyanin A-type, units Ode to Odg (1233 aa).

Residues 1 to 4 (EGNE) form an ODD region. An ODE region spans residues 5-422 (YLVRKNVERL…KQDADIDIPL (418 aa)). Residue His-45 coordinates Cu cation. Cys-51 and Cys-62 are joined by a disulfide. The 2'-(S-cysteinyl)-histidine (Cys-His) cross-link spans 63–65 (CLH). Cu cation-binding residues include His-65, His-74, His-186, His-190, and His-217. 2 cysteine pairs are disulfide-bonded: Cys-176/Cys-243 and Cys-334/Cys-340. Asn-392 carries an N-linked (GlcNAc...) asparagine glycan. Residues 423–839 (NHIRRNVESL…KEIEKEAVRG (417 aa)) are ODF. His-463 contacts Cu cation. Cys-468 and Cys-478 are disulfide-bonded. Residues 479 to 481 (CLH) constitute a cross-link (2'-(S-cysteinyl)-histidine (Cys-His)). 2 residues coordinate Cu cation: His-481 and His-490. The N-linked (GlcNAc...) asparagine glycan is linked to Asn-538. Cystine bridges form between Cys-589-Cys-656 and Cys-743-Cys-748. Cu cation-binding residues include His-599, His-603, and His-630. The segment at 840-1233 (TIIRKNVNSL…VFLAPAKTTH (394 aa)) is ODG. Cu cation is bound at residue His-880. A disulfide bond links Cys-886 and Cys-896. An N-linked (GlcNAc...) asparagine glycan is attached at Asn-890. A cross-link (2'-(S-cysteinyl)-histidine (Cys-His)) is located at residues 897–899 (CQH). 5 residues coordinate Cu cation: His-899, His-908, His-1008, His-1012, and His-1039. Cystine bridges form between Cys-998–Cys-1065 and Cys-1152–Cys-1158.

Belongs to the tyrosinase family. Hemocyanin subfamily. In terms of assembly, decamers of large identical subunits (350 kDa), each containing 7 globular oxygen-binding domains: ODA, ODB, ODC, ODD, ODE, ODF, and ODG. It depends on Cu(2+) as a cofactor.

In terms of biological role, hemocyanins are copper-containing oxygen carriers occurring freely dissolved in the hemolymph of many mollusks and arthropods. This is Hemocyanin A-type, units Ode to Odg from Enteroctopus dofleini (North Pacific giant octopus).